Here is a 316-residue protein sequence, read N- to C-terminus: Pantothenate kinase (316 aa).

95–102 lines the ATP pocket; that stretch reads GSVAVGKS.

The protein belongs to the prokaryotic pantothenate kinase family.

It localises to the cytoplasm. It catalyses the reaction (R)-pantothenate + ATP = (R)-4'-phosphopantothenate + ADP + H(+). It functions in the pathway cofactor biosynthesis; coenzyme A biosynthesis; CoA from (R)-pantothenate: step 1/5. This chain is Pantothenate kinase, found in Shewanella piezotolerans (strain WP3 / JCM 13877).